The chain runs to 199 residues: Transgelin-3 (199 aa).

One can recognise a Calponin-homology (CH) domain in the interval 24 to 136; that stretch reads ADLENKLVDW…RTLMALGSVA (113 aa). Ser-163 is modified (phosphoserine). The stretch at 174–199 is one Calponin-like repeat; it reads IGLQMGSNKGASQAGMTGYGMPRQIM. Polar residues predominate over residues 178-188; that stretch reads MGSNKGASQAG. The disordered stretch occupies residues 178–199; it reads MGSNKGASQAGMTGYGMPRQIM.

Belongs to the calponin family. Abundant and ubiquitous expression in neurons.

This is Transgelin-3 (Tagln3) from Rattus norvegicus (Rat).